The sequence spans 326 residues: Flap endonuclease 1 (326 aa).

Residues 1-98 (MGVQFNDSIP…KTREERRKVK (98 aa)) form an N-domain region. Asp-27, Asp-80, Glu-152, Glu-154, Asp-173, Asp-175, and Asp-224 together coordinate Mg(2+). The tract at residues 116–245 (DMQKYAKRIN…KKALTIIKNK (130 aa)) is I-domain. Residues 318–326 (SQTSLDSWF) form an interaction with PCNA region.

It belongs to the XPG/RAD2 endonuclease family. FEN1 subfamily. Interacts with PCNA. PCNA stimulates the nuclease activity without altering cleavage specificity. It depends on Mg(2+) as a cofactor.

Its function is as follows. Structure-specific nuclease with 5'-flap endonuclease and 5'-3' exonuclease activities involved in DNA replication and repair. During DNA replication, cleaves the 5'-overhanging flap structure that is generated by displacement synthesis when DNA polymerase encounters the 5'-end of a downstream Okazaki fragment. Binds the unpaired 3'-DNA end and kinks the DNA to facilitate 5' cleavage specificity. Cleaves one nucleotide into the double-stranded DNA from the junction in flap DNA, leaving a nick for ligation. Also involved in the base excision repair (BER) pathway. Acts as a genome stabilization factor that prevents flaps from equilibrating into structures that lead to duplications and deletions. Also possesses 5'-3' exonuclease activity on nicked or gapped double-stranded DNA. The polypeptide is Flap endonuclease 1 (Methanococcus aeolicus (strain ATCC BAA-1280 / DSM 17508 / OCM 812 / Nankai-3)).